Here is a 122-residue protein sequence, read N- to C-terminus: Large ribosomal subunit protein uL14 (122 aa).

The protein belongs to the universal ribosomal protein uL14 family. As to quaternary structure, part of the 50S ribosomal subunit. Forms a cluster with proteins L3 and L19. In the 70S ribosome, L14 and L19 interact and together make contacts with the 16S rRNA in bridges B5 and B8.

In terms of biological role, binds to 23S rRNA. Forms part of two intersubunit bridges in the 70S ribosome. This Chlorobium phaeobacteroides (strain DSM 266 / SMG 266 / 2430) protein is Large ribosomal subunit protein uL14.